A 1372-amino-acid chain; its full sequence is Paired amphipathic helix protein Sin3-like 1 (1372 aa).

Residues Met-1–Ser-50 form a disordered region. PAH domains lie at Gln-51–Gly-121 and Lys-136–Ser-206. Residues His-210 to Gln-222 show a composition bias toward low complexity. 2 disordered regions span residues His-210–Arg-244 and Arg-272–Ala-323. Over residues Arg-272–Ala-315 the composition is skewed to basic and acidic residues. A PAH 3 domain is found at Leu-331–Cys-400. Disordered stretches follow at residues Asp-764–Thr-783, Leu-791–Ser-817, and Gly-934–Met-1056. The span at Asp-938–Lys-957 shows a compositional bias: basic and acidic residues. Composition is skewed to acidic residues over residues Ala-990 to Asn-1013 and Ser-1028 to Glu-1042. Residue Ser-1049 is modified to Phosphoserine.

In terms of assembly, interacts (via PAH3) with ALY2. Interacts (via PAH2) with TBP1. Interacts with ALY3, GATA21, TRP2, TKI1, VAL1, SKP1B, FBX5 and PUB14.

The protein resides in the nucleus. Its function is as follows. Acts as a transcriptional repressor. A histone deacetylase (HDAC) activity is required for transcription repression. May play a role in telomere stability. In Arabidopsis thaliana (Mouse-ear cress), this protein is Paired amphipathic helix protein Sin3-like 1 (SNL1).